The following is an 84-amino-acid chain: Tenecin-1 (84 aa).

The signal sequence occupies residues Met-1–Ala-19. The propeptide occupies Phe-20–Arg-41. 3 cysteine pairs are disulfide-bonded: Cys-44–Cys-75, Cys-61–Cys-81, and Cys-65–Cys-83.

It belongs to the invertebrate defensin family. Type 1 subfamily.

Its subcellular location is the secreted. In terms of biological role, bactericidal protein produced in response to injury. It is cytotoxic to Gram-positive bacteria. The protein is Tenecin-1 of Tenebrio molitor (Yellow mealworm beetle).